We begin with the raw amino-acid sequence, 139 residues long: Small ribosomal subunit protein uS12 (139 aa).

Residues 1-44 form a disordered region; that stretch reads MPTINQLVKKPRTSKVKKSTAPALNKGYNSHKKKATDLASPQKR. Positions 9–18 are enriched in basic residues; the sequence is KKPRTSKVKK. Position 102 is a 3-methylthioaspartic acid (D102).

This sequence belongs to the universal ribosomal protein uS12 family. As to quaternary structure, part of the 30S ribosomal subunit. Contacts proteins S8 and S17. May interact with IF1 in the 30S initiation complex.

Functionally, with S4 and S5 plays an important role in translational accuracy. In terms of biological role, interacts with and stabilizes bases of the 16S rRNA that are involved in tRNA selection in the A site and with the mRNA backbone. Located at the interface of the 30S and 50S subunits, it traverses the body of the 30S subunit contacting proteins on the other side and probably holding the rRNA structure together. The combined cluster of proteins S8, S12 and S17 appears to hold together the shoulder and platform of the 30S subunit. The chain is Small ribosomal subunit protein uS12 from Macrococcus caseolyticus (strain JCSC5402) (Macrococcoides caseolyticum).